An 84-amino-acid polypeptide reads, in one-letter code: U21-theraphotoxin-Cg1a 1 (84 aa).

An N-terminal signal peptide occupies residues 1–21; the sequence is MKVSVLITLAVLGVMFLLTSA. The propeptide occupies 22-47; it reads EERGSDQMDSPAWLKSMEIIFQSEER. 3 disulfide bridges follow: cysteine 49–cysteine 63, cysteine 56–cysteine 68, and cysteine 62–cysteine 76. Valine 82 bears the Valine amide mark.

This sequence belongs to the neurotoxin 10 (Hwtx-1) family. 05 (F4a) subfamily. In terms of tissue distribution, expressed by the venom gland.

It localises to the secreted. In terms of biological role, probable ion channel inhibitor. The sequence is that of U21-theraphotoxin-Cg1a 1 from Chilobrachys guangxiensis (Chinese earth tiger tarantula).